A 326-amino-acid polypeptide reads, in one-letter code: NADH-ubiquinone oxidoreductase chain 1 (326 aa).

The next 9 membrane-spanning stretches (helical) occupy residues Met-1 to Val-21, Pro-41 to Val-61, Ile-72 to Val-92, Ile-104 to Thr-124, Ile-152 to Val-172, Ser-177 to Ala-197, Tyr-234 to Phe-256, Val-268 to Phe-288, and Ile-303 to Asn-323.

This sequence belongs to the complex I subunit 1 family.

The protein resides in the mitochondrion inner membrane. It catalyses the reaction a ubiquinone + NADH + 5 H(+)(in) = a ubiquinol + NAD(+) + 4 H(+)(out). In terms of biological role, core subunit of the mitochondrial membrane respiratory chain NADH dehydrogenase (Complex I) that is believed to belong to the minimal assembly required for catalysis. Complex I functions in the transfer of electrons from NADH to the respiratory chain. The immediate electron acceptor for the enzyme is believed to be ubiquinone. In Chondrus crispus (Carrageen Irish moss), this protein is NADH-ubiquinone oxidoreductase chain 1 (ND1).